The primary structure comprises 944 residues: UvrABC system protein A (944 aa).

Residue Gly33–Ser40 participates in ATP binding. The C4-type zinc-finger motif lies at Cys252–Cys279. 2 ABC transporter domains span residues Trp309 to Leu587 and Ile607 to Lys935. Gly639–Ser646 lines the ATP pocket. The C4-type zinc finger occupies Cys738–Cys764.

It belongs to the ABC transporter superfamily. UvrA family. As to quaternary structure, forms a heterotetramer with UvrB during the search for lesions.

It is found in the cytoplasm. Its function is as follows. The UvrABC repair system catalyzes the recognition and processing of DNA lesions. UvrA is an ATPase and a DNA-binding protein. A damage recognition complex composed of 2 UvrA and 2 UvrB subunits scans DNA for abnormalities. When the presence of a lesion has been verified by UvrB, the UvrA molecules dissociate. The sequence is that of UvrABC system protein A from Staphylococcus epidermidis (strain ATCC 35984 / DSM 28319 / BCRC 17069 / CCUG 31568 / BM 3577 / RP62A).